The sequence spans 430 residues: Transcription factor PIF4 (430 aa).

Disordered stretches follow at residues 42–71, 97–136, 160–183, 223–266, and 405–430; these read QTHR…DQET, MDPL…VMPP, TVGP…SHDR, DRKR…NLSE, and SSPA…RLDH. The span at 43–60 shows a compositional bias: basic and acidic residues; sequence THREQTQTQKQDHHEEAL. Polar residues predominate over residues 61-71; that stretch reads RSSTFLEDQET. Residues 126 to 136 show a composition bias toward pro residues; sequence CPDPPPQVMPP. A compositionally biased stretch (polar residues) spans 160–175; the sequence is TVGPSHCGSNPSQNDL. Residues 244 to 253 show a composition bias toward low complexity; the sequence is NKSNQRSGSN. Basic and acidic residues predominate over residues 257 to 266; that stretch reads RAAEVHNLSE. Residues 257–306 enclose the bHLH domain; that stretch reads RAAEVHNLSERRRRDRINERMKALQELIPHCSKTDKASILDEAIDYLKSL. Residues 405–419 are compositionally biased toward low complexity; it reads SSPAGQQSQQPSSVP.

The protein belongs to the bHLH protein family. Interacts preferentially with the Pfr form of phytochrome B (phyB). Binds DNA as a homodimer, but once bound to DNA, loses its capacity to interact with phyB. Interacts with APRR1/TOC1 and PIF3. Binds to RGL2 and RGA. Forms non-functional heterodimer with HFR1. Interacts with PHYB, CRY1 and CRY2 in the nucleus in response to low blue light (LBL). Interacts with FYPP1 and FYPP3. Associates to PTAC12/HMR/PAP5, which acts as a transcriptional coactivator to trigger the thermoresponsive growth-relevant genes and promote warm-temperature-dependent PIF4 accumulation. Interacts with MED14. In terms of tissue distribution, mainly expressed in leaves, stems and seedlings, and, to a lower extent, in fruits, flowers and roots.

It is found in the nucleus. Transcription factor acting negatively in the phytochrome B signaling pathway. May regulate the expression of a subset of genes involved in cell expansion by binding to the G-box motif. Activated by CRY1 and CRY2 in response to low blue light (LBL) by direct binding at chromatin on E-box variant 5'-CA[CT]GTG-3' to stimulate specific gene expression to adapt global physiology (e.g. hypocotyl elongation in low blue light). Element of a PIF4/HMR/MED14-dependent thermoresponsive process; collaboratively with its transcriptional coactivator PTAC12/HMR/PAP5, involved in the regulation of thermoresponsive growth-relevant genes (e.g. mainly involved in biosynthesis and signaling of the phytohormone auxin) leading to daytime warm temperature elicitation of MED14-dependent thermomorphogenesis (e.g. hypocotyl elongation). The protein is Transcription factor PIF4 of Arabidopsis thaliana (Mouse-ear cress).